The chain runs to 557 residues: MKEKIRKKILLAPEEPGVYIFKNKGVPIYIGKAKRLSSRLRSYLNPQTEKVFRIVEEADELETIVVMNEREAFILEANLIKKYRPKYNVRLKDTNFYPYIRISDDEIPYVEIVKRKLRDGTYFGPYTSVQFVRNLLEILQKIMGFRTCKSDLKRIKRPCFLYHLGRCTGPCIGNIESHGEAVRRLKEFLSGNMEEVFDYLKEKMETHSRMLDFENAAKYRDLLLNLSNVLESQGVVFEESISCDVLVHAHDLFVVLRVRNGYLVGKISFEMEGGNVEDFIREYYVSGRGDIPKTLILESDLDEMDYSSLGFEYVGPPRSTTEEDLLEKAKKNLENELKMRGLRKEALEELMKLLNMKDFPYRIEGIDISHLQGKYTVASLVVFEDGFPKKSDYRRYKIEQDHPDDYESIRTVVKRRYSKHPLPNLLFVDGGIGQVNAAVEALKEIGKDCPVVGLAKKEETVVFENREIKLPHDHPVLRLLVQIRDETHRFAVSYHRKRREKESLRSVLDSVPGIGPIRKKKLIEYFGSLENIRSASLEEIARVIGSAEIAKRILDVL.

Positions 14-89 (EEPGVYIFKN…IKKYRPKYNV (76 aa)) constitute a GIY-YIG domain. The region spanning 194–229 (EEVFDYLKEKMETHSRMLDFENAAKYRDLLLNLSNV) is the UVR domain.

It belongs to the UvrC family. In terms of assembly, interacts with UvrB in an incision complex.

Its subcellular location is the cytoplasm. Its function is as follows. The UvrABC repair system catalyzes the recognition and processing of DNA lesions. UvrC both incises the 5' and 3' sides of the lesion. The N-terminal half is responsible for the 3' incision and the C-terminal half is responsible for the 5' incision. The sequence is that of UvrABC system protein C from Thermotoga petrophila (strain ATCC BAA-488 / DSM 13995 / JCM 10881 / RKU-1).